We begin with the raw amino-acid sequence, 128 residues long: MAKLTKDELIEAFKEMTLIELSEFVKEFEEVFDVEAAAPVAAVAAGAPAAGGAAEEEKTEFDVVLTDAGAKKIGVIKAVREIVSGLGLKEAKELVEGAPKAILEGASKDDAEAAKAKLEEAGASVELK.

This sequence belongs to the bacterial ribosomal protein bL12 family. Homodimer. Part of the ribosomal stalk of the 50S ribosomal subunit. Forms a multimeric L10(L12)X complex, where L10 forms an elongated spine to which 2 to 4 L12 dimers bind in a sequential fashion. Binds GTP-bound translation factors.

In terms of biological role, forms part of the ribosomal stalk which helps the ribosome interact with GTP-bound translation factors. Is thus essential for accurate translation. The protein is Large ribosomal subunit protein bL12 of Corynebacterium aurimucosum (strain ATCC 700975 / DSM 44827 / CIP 107346 / CN-1) (Corynebacterium nigricans).